The chain runs to 160 residues: uncharacterized protein (160 aa).

The protein resides in the plastid. This is an uncharacterized protein from Euglena longa (Euglenophycean alga).